We begin with the raw amino-acid sequence, 294 residues long: Serine/threonine-protein kinase Aurora-1 (294 aa).

The 252-residue stretch at 31–282 (FDIGKPLGRG…LHKLLEHPWI (252 aa)) folds into the Protein kinase domain. Residues 37-45 (LGRGKFGHV) and Lys-60 each bind ATP. Asp-154 (proton acceptor) is an active-site residue. A Phosphoserine modification is found at Ser-176. Thr-185 is modified (phosphothreonine).

This sequence belongs to the protein kinase superfamily. Ser/Thr protein kinase family. Aurora subfamily. In terms of assembly, interacts with TPX2. Phosphorylation at Thr-185 may regulate activity and degradation of AUR1 in a cell cycle dependent manner. Abundant in roots, flowers and flower buds, low or absent in expanded leaves, stems and siliques.

Its subcellular location is the nucleus membrane. The protein localises to the cytoplasm. The protein resides in the cytoskeleton. It is found in the spindle. It localises to the spindle pole. Its subcellular location is the phragmoplast. It carries out the reaction L-seryl-[protein] + ATP = O-phospho-L-seryl-[protein] + ADP + H(+). It catalyses the reaction L-threonyl-[protein] + ATP = O-phospho-L-threonyl-[protein] + ADP + H(+). In terms of biological role, phosphorylates specifically 'Ser-10' of histone H3 in vitro and colocalizes with phosphorylated histone H3 during mitosis. Associates with cytoskeletal structures that are necessary for cytokinesis and with the microtubule spindle. Also colocalizes with gamma-tubulin and function in microtubule organizing centers (MTOCs). In contrast with the mammalian B-type Aurora, AUR1 has no kinase activity toward 'Ser-28' of histone H3. The protein is Serine/threonine-protein kinase Aurora-1 (AUR1) of Arabidopsis thaliana (Mouse-ear cress).